The chain runs to 706 residues: Serine/threonine-protein kinase BUR1 (706 aa).

The Protein kinase domain maps to 38 to 339 (YKPLGKIGEG…AIGGKNHAYF (302 aa)). Residues 44–52 (IGEGTFGEV) and K67 contribute to the ATP site. The Proton acceptor role is filled by D168. Basic and acidic residues-rich tracts occupy residues 360–523 (LDNH…RDSR), 545–570 (DYDR…DMTR), and 594–623 (DKVE…KSRD). The tract at residues 360-706 (LDNHKRREQE…YGRKRPRIER (347 aa)) is disordered. A compositionally biased stretch (pro residues) spans 625–648 (GPPPGPPLPADGPPPPPSSNPPRP). The span at 659-706 (WRRDSRDRRESRDRDGRDRDGRDRRLSSSRYARDEFDEYGRKRPRIER) shows a compositional bias: basic and acidic residues.

It belongs to the protein kinase superfamily. CMGC Ser/Thr protein kinase family. CDC2/CDKX subfamily.

Its subcellular location is the nucleus. The catalysed reaction is L-seryl-[protein] + ATP = O-phospho-L-seryl-[protein] + ADP + H(+). It catalyses the reaction L-threonyl-[protein] + ATP = O-phospho-L-threonyl-[protein] + ADP + H(+). It carries out the reaction [DNA-directed RNA polymerase] + ATP = phospho-[DNA-directed RNA polymerase] + ADP + H(+). Functionally, serine/threonine-protein kinase involved in transcription regulation. Phosphorylates the UBC2/RAD6 ubiquitin-conjugating enzyme (E2), leading to monoubiquitination of histone H2B and the silencing of telomeric-associated genes. Also required for histone H3 methylation. Necessary for the recovery from pheromone-induced growth arrest in the cell cycle G1 phase. The polypeptide is Serine/threonine-protein kinase BUR1 (BUR1) (Yarrowia lipolytica (strain CLIB 122 / E 150) (Yeast)).